Reading from the N-terminus, the 394-residue chain is 1-deoxy-D-xylulose 5-phosphate reductoisomerase (394 aa).

NADPH-binding residues include T10, G11, S12, I13, G38, R39, N40, and N123. K124 provides a ligand contact to 1-deoxy-D-xylulose 5-phosphate. Position 125 (E125) interacts with NADPH. D149 is a binding site for Mn(2+). 1-deoxy-D-xylulose 5-phosphate-binding residues include S150, E151, S175, and H198. E151 contributes to the Mn(2+) binding site. G204 is an NADPH binding site. 1-deoxy-D-xylulose 5-phosphate contacts are provided by S211, N216, K217, and E220. Position 220 (E220) interacts with Mn(2+).

This sequence belongs to the DXR family. Mg(2+) serves as cofactor. It depends on Mn(2+) as a cofactor.

It catalyses the reaction 2-C-methyl-D-erythritol 4-phosphate + NADP(+) = 1-deoxy-D-xylulose 5-phosphate + NADPH + H(+). It participates in isoprenoid biosynthesis; isopentenyl diphosphate biosynthesis via DXP pathway; isopentenyl diphosphate from 1-deoxy-D-xylulose 5-phosphate: step 1/6. Its function is as follows. Catalyzes the NADPH-dependent rearrangement and reduction of 1-deoxy-D-xylulose-5-phosphate (DXP) to 2-C-methyl-D-erythritol 4-phosphate (MEP). The sequence is that of 1-deoxy-D-xylulose 5-phosphate reductoisomerase from Cereibacter sphaeroides (strain ATCC 17023 / DSM 158 / JCM 6121 / CCUG 31486 / LMG 2827 / NBRC 12203 / NCIMB 8253 / ATH 2.4.1.) (Rhodobacter sphaeroides).